A 484-amino-acid polypeptide reads, in one-letter code: 3-isopropylmalate dehydratase large subunit (484 aa).

[4Fe-4S] cluster-binding residues include C352, C412, and C415. Residues 463–484 (TLSSPSDLDPAPASAAIRTDAA) are disordered. Low complexity predominate over residues 464-478 (LSSPSDLDPAPASAA).

Belongs to the aconitase/IPM isomerase family. LeuC type 1 subfamily. Heterodimer of LeuC and LeuD. The cofactor is [4Fe-4S] cluster.

The catalysed reaction is (2R,3S)-3-isopropylmalate = (2S)-2-isopropylmalate. The protein operates within amino-acid biosynthesis; L-leucine biosynthesis; L-leucine from 3-methyl-2-oxobutanoate: step 2/4. In terms of biological role, catalyzes the isomerization between 2-isopropylmalate and 3-isopropylmalate, via the formation of 2-isopropylmaleate. The polypeptide is 3-isopropylmalate dehydratase large subunit (Pseudarthrobacter chlorophenolicus (strain ATCC 700700 / DSM 12829 / CIP 107037 / JCM 12360 / KCTC 9906 / NCIMB 13794 / A6) (Arthrobacter chlorophenolicus)).